We begin with the raw amino-acid sequence, 445 residues long: Argininosuccinate synthase (445 aa).

Residues 17-25 (AFSGGLDTS) and Ala43 each bind ATP. An L-citrulline-binding site is contributed by Tyr99. Positions 129 and 131 each coordinate ATP. L-aspartate is bound by residues Thr131, Asn135, and Asp136. Asn135 provides a ligand contact to L-citrulline. Asp136 serves as a coordination point for ATP. The L-citrulline site is built by Arg139 and Ser192. Residue Asp194 participates in ATP binding. 3 residues coordinate L-citrulline: Thr201, Glu203, and Glu280.

This sequence belongs to the argininosuccinate synthase family. Type 2 subfamily. Homotetramer.

It is found in the cytoplasm. The enzyme catalyses L-citrulline + L-aspartate + ATP = 2-(N(omega)-L-arginino)succinate + AMP + diphosphate + H(+). The protein operates within amino-acid biosynthesis; L-arginine biosynthesis; L-arginine from L-ornithine and carbamoyl phosphate: step 2/3. This Rhodopseudomonas palustris (strain ATCC BAA-98 / CGA009) protein is Argininosuccinate synthase.